We begin with the raw amino-acid sequence, 327 residues long: Probable pectinesterase A (327 aa).

The N-terminal stretch at 1–19 (MHTPYLLGALAALAATAVG) is a signal peptide. Residue asparagine 84 is glycosylated (N-linked (GlcNAc...) asparagine). Residue glutamine 145 participates in substrate binding. Residue aspartate 168 is the Proton donor of the active site. Aspartate 189 functions as the Nucleophile in the catalytic mechanism. Positions 249 and 251 each coordinate substrate. The N-linked (GlcNAc...) asparagine glycan is linked to asparagine 288.

Belongs to the pectinesterase family.

It localises to the secreted. It carries out the reaction [(1-&gt;4)-alpha-D-galacturonosyl methyl ester](n) + n H2O = [(1-&gt;4)-alpha-D-galacturonosyl](n) + n methanol + n H(+). The protein operates within glycan metabolism; pectin degradation; 2-dehydro-3-deoxy-D-gluconate from pectin: step 1/5. Its function is as follows. Involved in maceration and soft-rotting of plant tissue. This is Probable pectinesterase A (pmeA) from Aspergillus niger (strain ATCC MYA-4892 / CBS 513.88 / FGSC A1513).